We begin with the raw amino-acid sequence, 515 residues long: 2-isopropylmalate synthase (515 aa).

In terms of domain architecture, Pyruvate carboxyltransferase spans 4–266; the sequence is IKFFDTTLRD…ETRLNLQEIK (263 aa). Residues Asp-13, His-201, His-203, and Asn-237 each contribute to the Mn(2+) site. The regulatory domain stretch occupies residues 391–515; sequence QLSSIQVQYG…RAENEKVATS (125 aa).

It belongs to the alpha-IPM synthase/homocitrate synthase family. LeuA type 1 subfamily. As to quaternary structure, homodimer. Requires Mn(2+) as cofactor.

The protein resides in the cytoplasm. The catalysed reaction is 3-methyl-2-oxobutanoate + acetyl-CoA + H2O = (2S)-2-isopropylmalate + CoA + H(+). It participates in amino-acid biosynthesis; L-leucine biosynthesis; L-leucine from 3-methyl-2-oxobutanoate: step 1/4. In terms of biological role, catalyzes the condensation of the acetyl group of acetyl-CoA with 3-methyl-2-oxobutanoate (2-ketoisovalerate) to form 3-carboxy-3-hydroxy-4-methylpentanoate (2-isopropylmalate). In Geobacillus stearothermophilus (Bacillus stearothermophilus), this protein is 2-isopropylmalate synthase.